Reading from the N-terminus, the 186-residue chain is Ribosome-recycling factor (186 aa).

It belongs to the RRF family.

Its subcellular location is the cytoplasm. Its function is as follows. Responsible for the release of ribosomes from messenger RNA at the termination of protein biosynthesis. May increase the efficiency of translation by recycling ribosomes from one round of translation to another. This chain is Ribosome-recycling factor, found in Chelativorans sp. (strain BNC1).